A 61-amino-acid chain; its full sequence is Metallothionein-1C (61 aa).

The beta stretch occupies residues 1 to 29; that stretch reads MDPNCSCSTGGSCSCAGSCTCKACRCTSC. Residues Cys-5, Cys-7, Cys-13, Cys-15, Cys-19, Cys-21, Cys-24, Cys-26, Cys-29, Cys-33, Cys-34, Cys-36, Cys-37, Cys-41, Cys-44, Cys-48, Cys-50, Cys-57, Cys-59, and Cys-60 each coordinate a divalent metal cation. The segment at 30 to 61 is alpha; that stretch reads KKSCCSCCPAGCARCAQGCICKGASDKCSCCA.

Belongs to the metallothionein superfamily. Type 1 family. In terms of assembly, monomer.

Metallothioneins have a high content of cysteine residues that bind various heavy metals; these proteins are transcriptionally regulated by both heavy metals and glucocorticoids. The protein is Metallothionein-1C (MT1C) of Sus scrofa (Pig).